Reading from the N-terminus, the 969-residue chain is UvrABC system protein A (969 aa).

ATP is bound at residue 32-39 (GLSGSGKS). Residues 258–286 (CPNGHPLAVDDLEPRSFSFNSPYGACPEC) form a C4-type zinc finger. ABC transporter domains are found at residues 316–599 (WSAG…KDSI) and 619–948 (VDRK…KFLA). 652–659 (GVSGSGKS) contributes to the ATP binding site. The segment at 751–777 (CEACTGDGTIKIEMNFLPDVYVPCEVC) adopts a C4-type zinc-finger fold.

This sequence belongs to the ABC transporter superfamily. UvrA family. As to quaternary structure, forms a heterotetramer with UvrB during the search for lesions.

It localises to the cytoplasm. The UvrABC repair system catalyzes the recognition and processing of DNA lesions. UvrA is an ATPase and a DNA-binding protein. A damage recognition complex composed of 2 UvrA and 2 UvrB subunits scans DNA for abnormalities. When the presence of a lesion has been verified by UvrB, the UvrA molecules dissociate. This chain is UvrABC system protein A, found in Mycobacterium leprae (strain TN).